The chain runs to 430 residues: Serine--tRNA ligase (430 aa).

231 to 233 (TSE) is a binding site for L-serine. 262 to 264 (RSE) is an ATP binding site. Residue E285 participates in L-serine binding. ATP is bound at residue 349 to 352 (EISS). L-serine is bound at residue S385.

This sequence belongs to the class-II aminoacyl-tRNA synthetase family. Type-1 seryl-tRNA synthetase subfamily. Homodimer. The tRNA molecule binds across the dimer.

The protein localises to the cytoplasm. It carries out the reaction tRNA(Ser) + L-serine + ATP = L-seryl-tRNA(Ser) + AMP + diphosphate + H(+). The catalysed reaction is tRNA(Sec) + L-serine + ATP = L-seryl-tRNA(Sec) + AMP + diphosphate + H(+). Its pathway is aminoacyl-tRNA biosynthesis; selenocysteinyl-tRNA(Sec) biosynthesis; L-seryl-tRNA(Sec) from L-serine and tRNA(Sec): step 1/1. Catalyzes the attachment of serine to tRNA(Ser). Is also able to aminoacylate tRNA(Sec) with serine, to form the misacylated tRNA L-seryl-tRNA(Sec), which will be further converted into selenocysteinyl-tRNA(Sec). The sequence is that of Serine--tRNA ligase from Jannaschia sp. (strain CCS1).